A 527-amino-acid polypeptide reads, in one-letter code: Probable protein kinase UbiB (527 aa).

Positions 118-501 constitute a Protein kinase domain; it reads DFERVPVASA…QKRTNRLLQG (384 aa). ATP is bound by residues 124 to 132 and Lys150; that span reads VASASIAQV. Catalysis depends on Asp285, which acts as the Proton acceptor. A helical transmembrane segment spans residues 502 to 522; it reads LLMFGVAVGVGAVLARAWLAI.

This sequence belongs to the ABC1 family. UbiB subfamily.

It is found in the cell inner membrane. Its pathway is cofactor biosynthesis; ubiquinone biosynthesis [regulation]. In terms of biological role, is probably a protein kinase regulator of UbiI activity which is involved in aerobic coenzyme Q (ubiquinone) biosynthesis. The sequence is that of Probable protein kinase UbiB from Paraburkholderia phymatum (strain DSM 17167 / CIP 108236 / LMG 21445 / STM815) (Burkholderia phymatum).